The primary structure comprises 210 residues: Synaptosomal-associated protein 25 (210 aa).

Residues 1-23 are disordered; the sequence is MENSVENSMDPRSEQEEMQRCAD. Basic and acidic residues predominate over residues 9–20; that stretch reads MDPRSEQEEMQR. 2 t-SNARE coiled-coil homology domains span residues 23 to 85 and 147 to 209; these read DQIT…LSDL and DARE…ATKM.

Belongs to the SNAP-25 family.

It is found in the synapse. Its subcellular location is the synaptosome. It localises to the cell membrane. In terms of biological role, may play an important role in the synaptic function of specific neuronal systems. Associates with proteins involved in vesicle docking and membrane fusion. This chain is Synaptosomal-associated protein 25 (snap25), found in Torpedo marmorata (Marbled electric ray).